Reading from the N-terminus, the 149-residue chain is Large ribosomal subunit protein bL20m (149 aa).

Residues 1–9 (MVFLTTRLW) constitute a mitochondrion transit peptide.

Belongs to the bacterial ribosomal protein bL20 family. As to quaternary structure, component of the mitochondrial ribosome large subunit (39S) which comprises a 16S rRNA and about 50 distinct proteins. Interacts with OXA1L.

The protein localises to the mitochondrion. The chain is Large ribosomal subunit protein bL20m (Mrpl20) from Mus musculus (Mouse).